The chain runs to 347 residues: Heat-inducible transcription repressor HrcA (347 aa).

The protein belongs to the HrcA family.

Negative regulator of class I heat shock genes (grpE-dnaK-dnaJ and groELS operons). Prevents heat-shock induction of these operons. In Lactiplantibacillus plantarum (strain ATCC BAA-793 / NCIMB 8826 / WCFS1) (Lactobacillus plantarum), this protein is Heat-inducible transcription repressor HrcA.